Reading from the N-terminus, the 248-residue chain is tRNA (guanine-N(1)-)-methyltransferase (248 aa).

S-adenosyl-L-methionine contacts are provided by residues Gly117 and 137 to 142 (LGDFVL).

This sequence belongs to the RNA methyltransferase TrmD family. Homodimer.

The protein resides in the cytoplasm. It catalyses the reaction guanosine(37) in tRNA + S-adenosyl-L-methionine = N(1)-methylguanosine(37) in tRNA + S-adenosyl-L-homocysteine + H(+). Its function is as follows. Specifically methylates guanosine-37 in various tRNAs. This is tRNA (guanine-N(1)-)-methyltransferase from Herminiimonas arsenicoxydans.